Here is a 147-residue protein sequence, read N- to C-terminus: Hemoglobin subunit beta (147 aa).

One can recognise a Globin domain in the interval 3–147 (HWTAEEKQLI…VAHALARKYH (145 aa)). His-64 and His-93 together coordinate heme b.

Belongs to the globin family. As to quaternary structure, heterotetramer of two alpha chains and two beta chains. Red blood cells.

Functionally, involved in oxygen transport from the lung to the various peripheral tissues. The polypeptide is Hemoglobin subunit beta (HBB) (Anas platyrhynchos (Mallard)).